A 430-amino-acid polypeptide reads, in one-letter code: Probable transporter SCO4007 (430 aa).

Positions 1 to 17 (MPSSPSSTTPAPTSTPA) are enriched in low complexity. A disordered region spans residues 1–26 (MPSSPSSTTPAPTSTPAARREPSGKG). The next 11 helical transmembrane spans lie at 34-54 (LFLP…YLAA), 70-90 (AVAW…LFFA), 101-121 (LVAA…ASAG), 126-146 (AGAV…VPLV), 159-179 (VAAV…LGGL), 188-208 (AVFV…AYIL), 244-264 (AGMY…LTEG), 275-295 (GLFG…GGLV), 315-335 (VPLF…AVLV), 362-382 (TAYV…AGPA), and 383-403 (FGHW…VLGW).

It belongs to the major facilitator superfamily.

It localises to the cell membrane. This is Probable transporter SCO4007 from Streptomyces coelicolor (strain ATCC BAA-471 / A3(2) / M145).